A 344-amino-acid chain; its full sequence is Flavonoid 7-O-methyltransferase 1B (344 aa).

Asp-211 contributes to the S-adenosyl-L-methionine binding site. His-249 (proton acceptor) is an active-site residue.

The protein belongs to the class I-like SAM-binding methyltransferase superfamily. Cation-independent O-methyltransferase family. As to quaternary structure, homodimer.

It catalyses the reaction scutellarein + S-adenosyl-L-methionine = scutellarein 7-methyl ether + S-adenosyl-L-homocysteine. It carries out the reaction 4',7,8-trihydroxyflavone + S-adenosyl-L-methionine = 4',8-dihydroxy-7-methoxyflavone + S-adenosyl-L-homocysteine. The catalysed reaction is isorhamnetin + S-adenosyl-L-methionine = rhamnacene + S-adenosyl-L-homocysteine + H(+). The enzyme catalyses kaempferol + S-adenosyl-L-methionine = kaempferol 7-methyl ether + S-adenosyl-L-homocysteine + H(+). It catalyses the reaction (2S)-naringenin + S-adenosyl-L-methionine = (2S)-sakuranetin + S-adenosyl-L-homocysteine + H(+). It carries out the reaction quercetin + S-adenosyl-L-methionine = rhamnetin + S-adenosyl-L-homocysteine + H(+). The catalysed reaction is apigenin + S-adenosyl-L-methionine = genkwanin + S-adenosyl-L-homocysteine + H(+). The enzyme catalyses luteolin + S-adenosyl-L-methionine = luteolin 7-methyl ether + S-adenosyl-L-homocysteine + H(+). It functions in the pathway flavonoid metabolism. Functionally, flavonoid 7-O-methyltransferase involved in the biosynthesis of polymethoxylated flavonoids natural products such as pebrellin, aroma compounds which contribute to the flavor of peppermint, and exhibit pharmacological activities such as anti-allergic, anti-oxidant, antibacterial, anti-proliferative, and anti-inflammatory effects. Catalyzes S-adenosylmethionine-dependent regioselective 7-O-methylation of flavonoids; active on various hydroxylated flavonoid substrates, including luteolin (LUT), quercetin, kaempferol, isorhamnetin, apigenin (API), scutellarein (6-hydroxy-apigenin, 6-OH-API, SCU), 7,8,4'-trihydroxy-flavone and naringenin (NAR), and, with a lower efficiency, 7,8,3',4'-tetrahydroxy-flavone, taxifolin and hesperetin. This chain is Flavonoid 7-O-methyltransferase 1B, found in Mentha piperita (Peppermint).